Here is a 315-residue protein sequence, read N- to C-terminus: Mitochondrial glycine transporter (315 aa).

Solcar repeat units lie at residues 19–102 (SKTT…LRTG), 125–206 (TANL…LKRR), and 221–305 (KSSS…LILR). Transmembrane regions (helical) follow at residues 25–50 (FTAG…TRVQ), 77–103 (GTLP…RTGL), 128–153 (LATG…VRYE), 181–204 (GFGA…EQLK), 225–251 (INFV…KTRL), and 280–298 (GLGL…AWTV).

It belongs to the mitochondrial carrier (TC 2.A.29) family. SLC25A38 subfamily.

Its subcellular location is the mitochondrion inner membrane. The catalysed reaction is glycine(in) = glycine(out). Its function is as follows. Mitochondrial glycine transporter that imports glycine into the mitochondrial matrix. Plays an important role in providing glycine for the first enzymatic step in heme biosynthesis, the condensation of glycine with succinyl-CoA to produce 5-aminolevulinate (ALA) in the mitochondrial matrix. In Aspergillus niger (strain ATCC MYA-4892 / CBS 513.88 / FGSC A1513), this protein is Mitochondrial glycine transporter.